Here is a 143-residue protein sequence, read N- to C-terminus: Anti-sigma F factor (143 aa).

It belongs to the anti-sigma-factor family.

The enzyme catalyses L-seryl-[protein] + ATP = O-phospho-L-seryl-[protein] + ADP + H(+). The catalysed reaction is L-threonyl-[protein] + ATP = O-phospho-L-threonyl-[protein] + ADP + H(+). Functionally, binds to sigma F and blocks its ability to form an RNA polymerase holoenzyme (E-sigma F). Phosphorylates SpoIIAA on a serine residue. This phosphorylation may enable SpoIIAA to act as an anti-anti-sigma factor that counteracts SpoIIAB and thus releases sigma F from inhibition. This Clostridium acetobutylicum (strain ATCC 824 / DSM 792 / JCM 1419 / IAM 19013 / LMG 5710 / NBRC 13948 / NRRL B-527 / VKM B-1787 / 2291 / W) protein is Anti-sigma F factor.